Reading from the N-terminus, the 259-residue chain is Deoxyribose-phosphate aldolase (259 aa).

The active-site Proton donor/acceptor is D102. K167 functions as the Schiff-base intermediate with acetaldehyde in the catalytic mechanism. K201 functions as the Proton donor/acceptor in the catalytic mechanism.

The protein belongs to the DeoC/FbaB aldolase family. DeoC type 2 subfamily.

It localises to the cytoplasm. The catalysed reaction is 2-deoxy-D-ribose 5-phosphate = D-glyceraldehyde 3-phosphate + acetaldehyde. It participates in carbohydrate degradation; 2-deoxy-D-ribose 1-phosphate degradation; D-glyceraldehyde 3-phosphate and acetaldehyde from 2-deoxy-alpha-D-ribose 1-phosphate: step 2/2. Functionally, catalyzes a reversible aldol reaction between acetaldehyde and D-glyceraldehyde 3-phosphate to generate 2-deoxy-D-ribose 5-phosphate. The protein is Deoxyribose-phosphate aldolase of Escherichia coli (strain SMS-3-5 / SECEC).